The sequence spans 786 residues: Endonuclease MutS2 (786 aa).

Residue 335–342 participates in ATP binding; sequence GPNTGGKT. A Smr domain is found at 711 to 786; the sequence is LDLRGERFEN…GLGVTVVELK (76 aa).

Belongs to the DNA mismatch repair MutS family. MutS2 subfamily. As to quaternary structure, homodimer. Binds to stalled ribosomes, contacting rRNA.

Endonuclease that is involved in the suppression of homologous recombination and thus may have a key role in the control of bacterial genetic diversity. In terms of biological role, acts as a ribosome collision sensor, splitting the ribosome into its 2 subunits. Detects stalled/collided 70S ribosomes which it binds and splits by an ATP-hydrolysis driven conformational change. Acts upstream of the ribosome quality control system (RQC), a ribosome-associated complex that mediates the extraction of incompletely synthesized nascent chains from stalled ribosomes and their subsequent degradation. Probably generates substrates for RQC. The chain is Endonuclease MutS2 from Bacillus cereus (strain B4264).